The following is an 835-amino-acid chain: Ion-translocating oxidoreductase complex subunit C (835 aa).

4Fe-4S ferredoxin-type domains follow at residues 368-397 and 407-436; these read YAPP…QQLY and KSEE…IQYF. [4Fe-4S] cluster contacts are provided by Cys377, Cys380, Cys383, Cys387, Cys416, Cys419, Cys422, and Cys426. Residues 468–489 are compositionally biased toward basic and acidic residues; that stretch reads AREEQERKARAQKAMEARRQEM. Disordered stretches follow at residues 468–492, 540–574, 586–618, 634–666, 682–714, 730–762, and 778–811; these read AREE…MKTA, QRKA…SKSA, KAAQ…AEDP, KAAQ…ADDP, and KAAQ…EDPR. Polar residues predominate over residues 552–561; sequence TQNTDVSQVE. The span at 648-657 shows a compositional bias: polar residues; that stretch reads SSSNTLSVGN. 2 stretches are compositionally biased toward polar residues: residues 745-756 and 793-804; these read SSDTLSVGNETE.

It belongs to the 4Fe4S bacterial-type ferredoxin family. RnfC subfamily. In terms of assembly, the complex is composed of six subunits: RnfA, RnfB, RnfC, RnfD, RnfE and RnfG. The cofactor is [4Fe-4S] cluster.

It localises to the cell inner membrane. Its function is as follows. Part of a membrane-bound complex that couples electron transfer with translocation of ions across the membrane. This is Ion-translocating oxidoreductase complex subunit C from Pasteurella multocida (strain Pm70).